Here is a 176-residue protein sequence, read N- to C-terminus: MKWRSTTVVCVRKNDSVVMVSDGQVTYGNTIMKGNAKKVRKMGEGNVLAGFAGSVADAMALFDRFEAKYREWGGNLLKSAVELAKDWRTDRVLRRLEALLLVADKKYTFIISGTGEVIQPEDDIASIGSGSPYAIAAGRALLKHTNLSAKEIALESIRIASEICIYTNDNFTIEEL.

Thr-6 is a catalytic residue. 3 residues coordinate Na(+): Ser-161, Cys-164, and Thr-167.

The protein belongs to the peptidase T1B family. HslV subfamily. In terms of assembly, a double ring-shaped homohexamer of HslV is capped on each side by a ring-shaped HslU homohexamer. The assembly of the HslU/HslV complex is dependent on binding of ATP.

The protein localises to the cytoplasm. It catalyses the reaction ATP-dependent cleavage of peptide bonds with broad specificity.. With respect to regulation, allosterically activated by HslU binding. Its function is as follows. Protease subunit of a proteasome-like degradation complex believed to be a general protein degrading machinery. In Thermosipho melanesiensis (strain DSM 12029 / CIP 104789 / BI429), this protein is ATP-dependent protease subunit HslV.